Consider the following 317-residue polypeptide: Melanocyte-stimulating hormone receptor (317 aa).

Residues 1 to 37 are Extracellular-facing; sequence MPVQGSQRRLLGSLNSTPTATPHLGLAANQTGARCLE. The N-linked (GlcNAc...) asparagine glycan is linked to asparagine 29. Residues 38–63 traverse the membrane as a helical segment; it reads VSIPDGLFLSLGLVSLVENVLVVTAI. Topologically, residues 64–72 are cytoplasmic; the sequence is AKNRNLHSP. A helical transmembrane segment spans residues 73–93; sequence MYCFICCLALSDLLVSGSNML. Residues 94–118 lie on the Extracellular side of the membrane; the sequence is ETAVILLLEAGALAARAAVVQQLDN. Residues 119-140 traverse the membrane as a helical segment; that stretch reads VIDVITCSSMLASLCFLGAIAV. Over 141 to 163 the chain is Cytoplasmic; the sequence is DRYISIFYALRYHSIVTLPRARR. A helical membrane pass occupies residues 164 to 183; the sequence is AVAAIWVASVLFSMLFIAYY. At 184 to 191 the chain is on the extracellular side; that stretch reads DHAAVLLC. Residues 192–211 form a helical membrane-spanning segment; that stretch reads LVVFFLAMLVLMAVLYIHML. Residues 212 to 240 are Cytoplasmic-facing; sequence ARARQHAQGIARLHKRQCPAHQGFGLKGA. Residues 241–266 form a helical membrane-spanning segment; sequence ATLTILLGIFFLCWGPFFLHLTLIVL. Over 267–279 the chain is Extracellular; that stretch reads CPQHPTCSCIFKN. A helical membrane pass occupies residues 280-300; it reads FNLFLALIICNAIIDPLIYAF. The Cytoplasmic portion of the chain corresponds to 301 to 317; it reads RSQELRRTLKEVLLCSW. The S-palmitoyl cysteine moiety is linked to residue cysteine 315.

This sequence belongs to the G-protein coupled receptor 1 family. Interacts with MGRN1, but does not undergo MGRN1-mediated ubiquitination; this interaction competes with GNAS-binding and thus inhibits agonist-induced cAMP production. Interacts with OPN3; the interaction results in a decrease in MC1R-mediated cAMP signaling and ultimately a decrease in melanin production in melanocytes.

The protein localises to the cell membrane. Functionally, receptor for MSH (alpha, beta and gamma) and ACTH. The activity of this receptor is mediated by G proteins which activate adenylate cyclase. Mediates melanogenesis, the production of eumelanin (black/brown) and phaeomelanin (red/yellow), via regulation of cAMP signaling in melanocytes. In Cercopithecus mitis (Blue monkey), this protein is Melanocyte-stimulating hormone receptor (MC1R).